The sequence spans 248 residues: Homeobox-leucine zipper protein HOX15 (248 aa).

A disordered region spans residues 1-44; it reads MAQDDEDVGLALGLSLGSGGHRRQRESRDEAPSSAAASLLTLRL. Over residues 32–44 the composition is skewed to low complexity; that stretch reads PSSAAASLLTLRL. The segment at residues 91-150 is a DNA-binding region (homeobox); sequence NSRKKLRLSKEQSALLEDRFKEHSTLNPKQKVALAKQLNLRPRQVEVWFQNRRARTKLKQ. Residues 149 to 193 are leucine-zipper; the sequence is KQTEVDCELLKRCCETLTEENRRLHRELQQLRALTHSTAAGFFMA. The segment at 223-248 is disordered; that stretch reads PTAAADRTNKPTAPHLFSPFAKSAAC.

It belongs to the HD-ZIP homeobox family. Class II subfamily. As to expression, expressed in seedlings, stems, leaf blades and panicles.

It is found in the nucleus. Probable transcription factor. This is Homeobox-leucine zipper protein HOX15 (HOX15) from Oryza sativa subsp. indica (Rice).